Consider the following 282-residue polypeptide: Phosphate transport system permease protein PstA (282 aa).

The next 6 helical transmembrane spans lie at 22 to 42 (LSYI…FTLI), 71 to 91 (LIGS…IGVL), 111 to 131 (FLND…VYSL), 136 to 156 (IEHF…IPIV), 198 to 218 (ILTG…PLLF), and 254 to 274 (NLAW…NIFT). The ABC transmembrane type-1 domain maps to 71–274 (LIGSFFIVGA…LFVLCLNIFT (204 aa)).

The protein belongs to the binding-protein-dependent transport system permease family. CysTW subfamily.

Its subcellular location is the cell inner membrane. Functionally, part of the binding-protein-dependent transport system for phosphate; probably responsible for the translocation of the substrate across the membrane. The sequence is that of Phosphate transport system permease protein PstA (pstA) from Haemophilus influenzae (strain ATCC 51907 / DSM 11121 / KW20 / Rd).